The following is a 98-amino-acid chain: Small ribosomal subunit protein uS17 (98 aa).

The protein belongs to the universal ribosomal protein uS17 family. In terms of assembly, part of the 30S ribosomal subunit.

In terms of biological role, one of the primary rRNA binding proteins, it binds specifically to the 5'-end of 16S ribosomal RNA. This Synechococcus sp. (strain CC9605) protein is Small ribosomal subunit protein uS17.